Here is a 378-residue protein sequence, read N- to C-terminus: S-adenosylmethionine:tRNA ribosyltransferase-isomerase (378 aa).

It belongs to the QueA family. Monomer.

It is found in the cytoplasm. It carries out the reaction 7-aminomethyl-7-carbaguanosine(34) in tRNA + S-adenosyl-L-methionine = epoxyqueuosine(34) in tRNA + adenine + L-methionine + 2 H(+). The protein operates within tRNA modification; tRNA-queuosine biosynthesis. In terms of biological role, transfers and isomerizes the ribose moiety from AdoMet to the 7-aminomethyl group of 7-deazaguanine (preQ1-tRNA) to give epoxyqueuosine (oQ-tRNA). The polypeptide is S-adenosylmethionine:tRNA ribosyltransferase-isomerase (Prochlorococcus marinus (strain MIT 9312)).